A 161-amino-acid polypeptide reads, in one-letter code: Anaerobic nitrite reductase Glb1-2 (161 aa).

The 150-residue stretch at 9-158 (AFTEEQEALV…LASAIIAEMK (150 aa)) folds into the Globin domain. Positions 42–46 (EIAPP) match the Homodimerization motif. Heme b is bound by residues serine 52, lysine 66, histidine 70, lysine 100, threonine 104, and histidine 105. A Homodimerization motif is present at residues 112–124 (PEHFEVTKQALLD).

It belongs to the plant globin family. Homodimer. Heme b serves as cofactor. Mainly expressed in root nodules and leaves, and, to a lower extent, in roots, stems, flowers and fruits. Accumulates in mature root nodules.

It catalyses the reaction Fe(III)-heme b-[protein] + nitric oxide + H2O = Fe(II)-heme b-[protein] + nitrite + 2 H(+). Functionally, phytoglobin that reduces nitrite to nitric oxide (NO) under anoxic conditions (e.g. during flooding or in waterlogged soil) and upon root nodulation. Required for general plant development and during nodulation, especially for the onset of symbiosis. Monitors nitric oxide (NO) levels during early phase of the nitrogen-fixing symbiosis and buffers oxygen in functioning nodules. Necessary for the production of pods. May not function as an oxygen storage or transport protein. Has an unusually high affinity for O(2) through a hexacoordinate heme iron because of a very low dissociation constant. This Lotus japonicus (Lotus corniculatus var. japonicus) protein is Anaerobic nitrite reductase Glb1-2.